A 129-amino-acid chain; its full sequence is Translation initiation factor 5A (129 aa).

Lysine 36 bears the Hypusine mark.

The protein belongs to the eIF-5A family.

It is found in the cytoplasm. Functions by promoting the formation of the first peptide bond. The sequence is that of Translation initiation factor 5A (eif5a) from Thermoplasma acidophilum (strain ATCC 25905 / DSM 1728 / JCM 9062 / NBRC 15155 / AMRC-C165).